Reading from the N-terminus, the 390-residue chain is Alcohol dehydrogenase-like 7 (390 aa).

Residues C56, S58, H78, C108, C111, C114, C122, and C187 each coordinate Zn(2+). An alcohol is bound by residues S58 and H78. S58 is a binding site for NAD(+). NAD(+)-binding positions include 212 to 217 (GLGSIG), D236, K241, 306 to 308 (LGV), F334, and R384.

This sequence belongs to the zinc-containing alcohol dehydrogenase family. Class-III subfamily. As to quaternary structure, homodimer. It depends on Zn(2+) as a cofactor.

It is found in the cytoplasm. The enzyme catalyses a primary alcohol + NAD(+) = an aldehyde + NADH + H(+). It carries out the reaction a secondary alcohol + NAD(+) = a ketone + NADH + H(+). The protein is Alcohol dehydrogenase-like 7 of Arabidopsis thaliana (Mouse-ear cress).